A 68-amino-acid polypeptide reads, in one-letter code: Conotoxin Lt5.2 (68 aa).

An N-terminal signal peptide occupies residues 1 to 19 (MLCLPVFIILLLLASPAAP). Residues 20 to 54 (KSLETRIQNDLIRAGLTDADLKTEKGFLSGLLNVA) constitute a propeptide that is removed on maturation.

This sequence belongs to the conotoxin T superfamily. In terms of processing, contains 2 disulfide bonds that can be either 'C1-C3, C2-C4' or 'C1-C4, C2-C3', since these disulfide connectivities have been observed for conotoxins with cysteine framework V (for examples, see AC P0DQQ7 and AC P81755). As to expression, expressed by the venom duct.

Its subcellular location is the secreted. The polypeptide is Conotoxin Lt5.2 (Conus litteratus (Lettered cone)).